Consider the following 143-residue polypeptide: Large ribosomal subunit protein uL11 (143 aa).

Belongs to the universal ribosomal protein uL11 family. In terms of assembly, part of the ribosomal stalk of the 50S ribosomal subunit. Interacts with L10 and the large rRNA to form the base of the stalk. L10 forms an elongated spine to which L12 dimers bind in a sequential fashion forming a multimeric L10(L12)X complex. Post-translationally, one or more lysine residues are methylated.

Its function is as follows. Forms part of the ribosomal stalk which helps the ribosome interact with GTP-bound translation factors. The chain is Large ribosomal subunit protein uL11 from Teredinibacter turnerae (strain ATCC 39867 / T7901).